Reading from the N-terminus, the 1079-residue chain is Ubiquitin carboxyl-terminal hydrolase 26 (1079 aa).

The span at 1–12 shows a compositional bias: basic residues; sequence MSRPNTRNKSKR. A disordered region spans residues 1–21; it reads MSRPNTRNKSKRPRADDCESP. Positions 106–446 constitute a USP domain; the sequence is AGLTNLGATC…DAYMLMYKRI (341 aa). Cysteine 115 acts as the Nucleophile in catalysis. Residue histidine 359 is the Proton acceptor of the active site. Residues 384–419 are disordered; the sequence is GLHPFGEKPGKSSDKTDQKPQGSSTADSVTNDDNNS. Basic and acidic residues predominate over residues 388–401; the sequence is FGEKPGKSSDKTDQ. The segment covering 402–417 has biased composition (polar residues); the sequence is KPQGSSTADSVTNDDN. 3 consecutive DUSP domains span residues 495–598, 613–715, and 738–862; these read AYIT…DDFC, DVYR…FPSD, and AVKL…AEIV. Residues 948–972 form a disordered region; it reads EASAAVPVPDRRTSKRSRRTTSGNS. The Ubiquitin-like domain occupies 961–1037; sequence SKRSRRTTSG…LWVKDSEIYE (77 aa).

This sequence belongs to the peptidase C19 family.

The protein localises to the nucleus. It carries out the reaction Thiol-dependent hydrolysis of ester, thioester, amide, peptide and isopeptide bonds formed by the C-terminal Gly of ubiquitin (a 76-residue protein attached to proteins as an intracellular targeting signal).. Recognizes and hydrolyzes the peptide bond at the C-terminal Gly of ubiquitin. Involved in the processing of poly-ubiquitin precursors as well as that of ubiquitinated proteins. Deubiquitinates H2BK143ub1 of histone H2B. This Oryza sativa subsp. japonica (Rice) protein is Ubiquitin carboxyl-terminal hydrolase 26 (UBP26).